A 209-amino-acid chain; its full sequence is Holliday junction branch migration complex subunit RuvA (209 aa).

The domain I stretch occupies residues 1 to 64; it reads MIGKLKGLVD…EDSIKLYGFA (64 aa). The tract at residues 65-143 is domain II; it reads SETEREWFRL…ALGASLHTLA (79 aa). A flexible linker region spans residues 144–154; it reads GAGSEGAGVEA. Residues 155 to 209 form a domain III region; that stretch reads PASGAVSDAISVLVNLGFGRSQAAVAVAASSKALGSGAGAGDLAKRALQELAQSG.

It belongs to the RuvA family. Homotetramer. Forms an RuvA(8)-RuvB(12)-Holliday junction (HJ) complex. HJ DNA is sandwiched between 2 RuvA tetramers; dsDNA enters through RuvA and exits via RuvB. An RuvB hexamer assembles on each DNA strand where it exits the tetramer. Each RuvB hexamer is contacted by two RuvA subunits (via domain III) on 2 adjacent RuvB subunits; this complex drives branch migration. In the full resolvosome a probable DNA-RuvA(4)-RuvB(12)-RuvC(2) complex forms which resolves the HJ.

The protein resides in the cytoplasm. The RuvA-RuvB-RuvC complex processes Holliday junction (HJ) DNA during genetic recombination and DNA repair, while the RuvA-RuvB complex plays an important role in the rescue of blocked DNA replication forks via replication fork reversal (RFR). RuvA specifically binds to HJ cruciform DNA, conferring on it an open structure. The RuvB hexamer acts as an ATP-dependent pump, pulling dsDNA into and through the RuvAB complex. HJ branch migration allows RuvC to scan DNA until it finds its consensus sequence, where it cleaves and resolves the cruciform DNA. This is Holliday junction branch migration complex subunit RuvA from Methylocella silvestris (strain DSM 15510 / CIP 108128 / LMG 27833 / NCIMB 13906 / BL2).